A 227-amino-acid chain; its full sequence is C4-dicarboxylate TRAP transporter small permease protein DctQ (227 aa).

The Cytoplasmic portion of the chain corresponds to 1-7 (MLRILDR). A helical membrane pass occupies residues 8–28 (AEEVLIAALIATATVLIFVSV). The Periplasmic segment spans residues 29–67 (THRFTLGFVADFVGFFRGHGMTGAAAAAKSLYTTLRGIN). Residues 68 to 88 (LVWAQELCIILFVWMAKFGAA) traverse the membrane as a helical segment. The Cytoplasmic portion of the chain corresponds to 89-112 (YGVRTGIHVGIDVLINRLDAPKRR). The chain crosses the membrane as a helical span at residues 113–133 (FFILLGLGAGALFTGIIATLG). At 134–149 (ANFVLHMYHASSTSPD) the chain is on the periplasmic side. Residues 150–170 (LELPMWLVYLAIPMGSSLMCF) form a helical membrane-spanning segment. Topologically, residues 171 to 227 (RFLQVAFGFARTGELPHHDHGHVDGVDTENEGIDAEGDVLLHSPLTPRDLVEKPKDN) are cytoplasmic.

It belongs to the TRAP transporter small permease family. In terms of assembly, the complex comprises the extracytoplasmic solute receptor protein DctP, and the two transmembrane proteins DctQ and DctM.

It localises to the cell inner membrane. Its function is as follows. Part of the tripartite ATP-independent periplasmic (TRAP) transport system DctPQM involved in C4-dicarboxylates uptake. The protein is C4-dicarboxylate TRAP transporter small permease protein DctQ of Rhodobacter capsulatus (Rhodopseudomonas capsulata).